The sequence spans 52 residues: UPF0181 protein HD_1137 (52 aa).

This sequence belongs to the UPF0181 family.

The chain is UPF0181 protein HD_1137 from Haemophilus ducreyi (strain 35000HP / ATCC 700724).